Here is a 388-residue protein sequence, read N- to C-terminus: LIM/homeobox protein Lhx9 (388 aa).

2 consecutive LIM zinc-binding domains span residues 69–130 (ISDR…CHLG) and 131–193 (ISAS…LSYT). 3 disordered regions span residues 239–263 (ENEA…RMRT), 321–356 (ENGG…LTDL), and 369–388 (SNMD…TNLF). The homeobox DNA-binding region spans 267 to 326 (HHQLRTMKSYFAINHNPDAKDLKQLAQKTGLTKRVLQVWFQNARAKFRRNLLRQENGGVD). Positions 344 to 356 (LTPPGTATTLTDL) are enriched in low complexity. A compositionally biased stretch (polar residues) spans 376–388 (SGSPSQTTLTNLF).

Interacts with LDB1 and LDB2.

The protein resides in the nucleus. In terms of biological role, involved in gonadal development. The polypeptide is LIM/homeobox protein Lhx9 (Lhx9) (Rattus norvegicus (Rat)).